Reading from the N-terminus, the 23-residue chain is Dahlein-4.2 (23 aa).

As to expression, expressed by the skin dorsal glands.

The protein localises to the secreted. Its function is as follows. Has no antimicrobial activity. The sequence is that of Dahlein-4.2 from Ranoidea dahlii (Dahl's aquatic frog).